We begin with the raw amino-acid sequence, 384 residues long: Mannitol-1-phosphate 5-dehydrogenase (384 aa).

4–15 contributes to the NAD(+) binding site; that stretch reads AVHFGAGNIGRG.

Belongs to the mannitol dehydrogenase family.

It carries out the reaction D-mannitol 1-phosphate + NAD(+) = beta-D-fructose 6-phosphate + NADH + H(+). This Lacticaseibacillus paracasei (strain ATCC 334 / BCRC 17002 / CCUG 31169 / CIP 107868 / KCTC 3260 / NRRL B-441) (Lactobacillus paracasei) protein is Mannitol-1-phosphate 5-dehydrogenase.